Reading from the N-terminus, the 676-residue chain is Symportin 1 (676 aa).

Positions 1–10 (MGKTRRNRVR) are enriched in basic residues. The interval 1 to 28 (MGKTRRNRVRNRTDPIAKPVKPPTDPEL) is disordered. Residues 183–216 (TILRLLFRLISADIAPQDIYEEAISCLTTLSEDN) form an ARM 1 repeat. A disordered region spans residues 325-385 (KGNQGSRESP…EDDEDDDDDS (61 aa)). 2 stretches are compositionally biased toward acidic residues: residues 338–354 (ADEEWNGFDDADGDAMD) and 363–385 (EDQEEDYEEIDVKEDDEDDDDDS). One copy of the ARM 2 repeat lies at 420 to 453 (TAVPQLIRLSNLPIDSDESLTIQSHALSALNNIS).

This sequence belongs to the nuclear import and ribosome assembly adapter family. In terms of assembly, component of a hexameric 5S RNP precursor complex, composed of 5S RNA, RRS1, RPF2, RPL5, RPL11 and SYO1; this complex acts as a precursor for ribosome assembly.

Its function is as follows. Involved in ribosomal large subunit assembly. The chain is Symportin 1 from Chaetomium thermophilum (strain DSM 1495 / CBS 144.50 / IMI 039719) (Thermochaetoides thermophila).